Consider the following 301-residue polypeptide: Recombination-associated protein RdgC (301 aa).

Belongs to the RdgC family.

It is found in the cytoplasm. The protein localises to the nucleoid. In terms of biological role, may be involved in recombination. This chain is Recombination-associated protein RdgC, found in Xanthomonas axonopodis pv. citri (strain 306).